The primary structure comprises 121 residues: Cysteine-rich neurotrophic factor (121 aa).

Positions 1-18 are cleaved as a signal peptide; it reads MLLKLIVALSLTLTLASA. A glycan (N-linked (GlcNAc...) asparagine) is linked at Asn-57.

The protein localises to the secreted. Interacts with the p75 low-affinity neurotrophin receptor. Evokes neurite outgrowth and modulated calcium currents in pedal motor neurons. May be involved in target-derived trophic support for motor neurons. The sequence is that of Cysteine-rich neurotrophic factor from Lymnaea stagnalis (Great pond snail).